Consider the following 190-residue polypeptide: Elongation factor P-like protein (190 aa).

Belongs to the elongation factor P family.

The protein is Elongation factor P-like protein of Klebsiella pneumoniae (strain 342).